Here is a 199-residue protein sequence, read N- to C-terminus: Recombination protein RecR (199 aa).

The C4-type zinc finger occupies 56-71; that stretch reads CQQCNNYTEQTLCALC. The 96-residue stretch at 79-174 folds into the Toprim domain; it reads TLLCVVESPA…NISQLAHGIP (96 aa).

Belongs to the RecR family.

Its function is as follows. May play a role in DNA repair. It seems to be involved in an RecBC-independent recombinational process of DNA repair. It may act with RecF and RecO. The chain is Recombination protein RecR from Legionella pneumophila subsp. pneumophila (strain Philadelphia 1 / ATCC 33152 / DSM 7513).